The sequence spans 389 residues: Tryptophan 2,3-dioxygenase (389 aa).

Substrate contacts are provided by residues 60–64 (FIITH) and Arg-131. Residue His-316 coordinates heme. Thr-331 serves as a coordination point for substrate.

Belongs to the tryptophan 2,3-dioxygenase family. As to quaternary structure, homotetramer. Dimer of dimers. It depends on heme as a cofactor.

The enzyme catalyses L-tryptophan + O2 = N-formyl-L-kynurenine. Its pathway is amino-acid degradation; L-tryptophan degradation via kynurenine pathway; L-kynurenine from L-tryptophan: step 1/2. It participates in pigment biosynthesis; ommochrome biosynthesis. Its function is as follows. Heme-dependent dioxygenase that catalyzes the oxidative cleavage of the L-tryptophan (L-Trp) pyrrole ring and converts L-tryptophan to N-formyl-L-kynurenine. Catalyzes the oxidative cleavage of the indole moiety. This chain is Tryptophan 2,3-dioxygenase, found in Mayetiola destructor (Hessian fly).